The chain runs to 267 residues: tRNA pseudouridine synthase A (267 aa).

Asp-51 (nucleophile) is an active-site residue. Tyr-109 contacts substrate.

This sequence belongs to the tRNA pseudouridine synthase TruA family. Homodimer.

The enzyme catalyses uridine(38/39/40) in tRNA = pseudouridine(38/39/40) in tRNA. Its function is as follows. Formation of pseudouridine at positions 38, 39 and 40 in the anticodon stem and loop of transfer RNAs. This Staphylococcus aureus (strain bovine RF122 / ET3-1) protein is tRNA pseudouridine synthase A.